The primary structure comprises 270 residues: Aliphatic sulfonates import ATP-binding protein SsuB 1 (270 aa).

One can recognise an ABC transporter domain in the interval 18 to 232 (VQLRNVVRQF…DSGQAGFQLI (215 aa)). Residue 50-57 (GASGSGKT) participates in ATP binding. The tract at residues 247-270 (PDTAPQASAPDSTFSELRRVASAR) is disordered. The span at 251–261 (PQASAPDSTFS) shows a compositional bias: polar residues.

This sequence belongs to the ABC transporter superfamily. Aliphatic sulfonates importer (TC 3.A.1.17.2) family. As to quaternary structure, the complex is composed of two ATP-binding proteins (SsuB), two transmembrane proteins (SsuC) and a solute-binding protein (SsuA).

The protein localises to the cell inner membrane. It catalyses the reaction ATP + H2O + aliphatic sulfonate-[sulfonate-binding protein]Side 1 = ADP + phosphate + aliphatic sulfonateSide 2 + [sulfonate-binding protein]Side 1.. In terms of biological role, part of the ABC transporter complex SsuABC involved in aliphatic sulfonates import. Responsible for energy coupling to the transport system. This chain is Aliphatic sulfonates import ATP-binding protein SsuB 1, found in Pseudomonas syringae pv. tomato (strain ATCC BAA-871 / DC3000).